Here is a 278-residue protein sequence, read N- to C-terminus: NAD-dependent protein deacylase (278 aa).

The region spanning 22-270 (RSRIFHRDSA…PEYIREFLTT (249 aa)) is the Deacetylase sirtuin-type domain. NAD(+) is bound at residue 46–65 (GAGISAESGIRTFRADDGLW). Residues Y90 and R93 each contribute to the substrate site. Residue 127–130 (QNID) coordinates NAD(+). H145 (proton acceptor) is an active-site residue. Zn(2+)-binding residues include C153 and C172. NAD(+) is bound by residues 212–214 (GTS), 238–240 (NLE), and A256.

The protein belongs to the sirtuin family. Class III subfamily. The cofactor is Zn(2+).

The protein resides in the cytoplasm. It catalyses the reaction N(6)-acetyl-L-lysyl-[protein] + NAD(+) + H2O = 2''-O-acetyl-ADP-D-ribose + nicotinamide + L-lysyl-[protein]. The catalysed reaction is N(6)-succinyl-L-lysyl-[protein] + NAD(+) + H2O = 2''-O-succinyl-ADP-D-ribose + nicotinamide + L-lysyl-[protein]. It carries out the reaction N(6)-(2-hydroxyisobutanoyl)-L-lysyl-[protein] + NAD(+) + H2O = 2''-O-(2-hydroxyisobutanoyl)-ADP-D-ribose + nicotinamide + L-lysyl-[protein]. NAD-dependent lysine deacetylase that specifically removes acetyl groups on target proteins. Also acts as a protein-lysine deacylase by mediating protein desuccinylation and de-2-hydroxyisobutyrylation. Modulates the activities of several proteins which are inactive in their acylated form. The chain is NAD-dependent protein deacylase from Yersinia pestis.